Consider the following 227-residue polypeptide: Phosphatidylserine decarboxylase proenzyme (227 aa).

Ser181 (schiff-base intermediate with substrate; via pyruvic acid) is an active-site residue. Pyruvic acid (Ser); by autocatalysis is present on Ser181.

It belongs to the phosphatidylserine decarboxylase family. PSD-A subfamily. In terms of assembly, heterodimer of a large membrane-associated beta subunit and a small pyruvoyl-containing alpha subunit. Requires pyruvate as cofactor. In terms of processing, is synthesized initially as an inactive proenzyme. Formation of the active enzyme involves a self-maturation process in which the active site pyruvoyl group is generated from an internal serine residue via an autocatalytic post-translational modification. Two non-identical subunits are generated from the proenzyme in this reaction, and the pyruvate is formed at the N-terminus of the alpha chain, which is derived from the carboxyl end of the proenzyme. The post-translation cleavage follows an unusual pathway, termed non-hydrolytic serinolysis, in which the side chain hydroxyl group of the serine supplies its oxygen atom to form the C-terminus of the beta chain, while the remainder of the serine residue undergoes an oxidative deamination to produce ammonia and the pyruvoyl prosthetic group on the alpha chain.

It localises to the cell membrane. It carries out the reaction a 1,2-diacyl-sn-glycero-3-phospho-L-serine + H(+) = a 1,2-diacyl-sn-glycero-3-phosphoethanolamine + CO2. The protein operates within phospholipid metabolism; phosphatidylethanolamine biosynthesis; phosphatidylethanolamine from CDP-diacylglycerol: step 2/2. Its function is as follows. Catalyzes the formation of phosphatidylethanolamine (PtdEtn) from phosphatidylserine (PtdSer). The chain is Phosphatidylserine decarboxylase proenzyme from Anaplasma phagocytophilum (strain HZ).